A 296-amino-acid polypeptide reads, in one-letter code: 4-hydroxy-tetrahydrodipicolinate synthase (296 aa).

Thr-46 serves as a coordination point for pyruvate. Catalysis depends on Tyr-134, which acts as the Proton donor/acceptor. Lys-162 serves as the catalytic Schiff-base intermediate with substrate. Ile-204 lines the pyruvate pocket.

Belongs to the DapA family. In terms of assembly, homotetramer; dimer of dimers.

It is found in the cytoplasm. The enzyme catalyses L-aspartate 4-semialdehyde + pyruvate = (2S,4S)-4-hydroxy-2,3,4,5-tetrahydrodipicolinate + H2O + H(+). The protein operates within amino-acid biosynthesis; L-lysine biosynthesis via DAP pathway; (S)-tetrahydrodipicolinate from L-aspartate: step 3/4. Functionally, catalyzes the condensation of (S)-aspartate-beta-semialdehyde [(S)-ASA] and pyruvate to 4-hydroxy-tetrahydrodipicolinate (HTPA). The sequence is that of 4-hydroxy-tetrahydrodipicolinate synthase from Clostridium novyi (strain NT).